Consider the following 329-residue polypeptide: uncharacterized protein (329 aa).

Residues M1–A22 form the signal peptide.

This is an uncharacterized protein from Arabidopsis thaliana (Mouse-ear cress).